Consider the following 42-residue polypeptide: Alpha-lactalbumin I (42 aa).

The C-type lysozyme domain maps to 1 to 42; it reads IDYRKCQASQILKEHGMDKVIPLPELVCTMFHISGLSPQAEV.

It belongs to the glycosyl hydrolase 22 family. As to quaternary structure, lactose synthase (LS) is a heterodimer of a catalytic component, beta1,4-galactosyltransferase (beta4Gal-T1) and a regulatory component, alpha-lactalbumin (LA). Mammary gland specific. Secreted in milk.

The protein localises to the secreted. In terms of biological role, regulatory subunit of lactose synthase, changes the substrate specificity of galactosyltransferase in the mammary gland making glucose a good acceptor substrate for this enzyme. This enables LS to synthesize lactose, the major carbohydrate component of milk. In other tissues, galactosyltransferase transfers galactose onto the N-acetylglucosamine of the oligosaccharide chains in glycoproteins. The protein is Alpha-lactalbumin I (LALBA) of Macropus giganteus (Eastern gray kangaroo).